The primary structure comprises 281 residues: Probable endonuclease 4 (281 aa).

Residues His69, His109, Glu145, Asp179, His182, His216, Asp229, His231, and Glu261 each contribute to the Zn(2+) site.

Belongs to the AP endonuclease 2 family. Zn(2+) is required as a cofactor.

The catalysed reaction is Endonucleolytic cleavage to 5'-phosphooligonucleotide end-products.. Functionally, endonuclease IV plays a role in DNA repair. It cleaves phosphodiester bonds at apurinic or apyrimidinic (AP) sites, generating a 3'-hydroxyl group and a 5'-terminal sugar phosphate. In Glaesserella parasuis serovar 5 (strain SH0165) (Haemophilus parasuis), this protein is Probable endonuclease 4.